The sequence spans 213 residues: Orotate phosphoribosyltransferase (213 aa).

K26 is a 5-phospho-alpha-D-ribose 1-diphosphate binding site. 34-35 (FF) is an orotate binding site. 5-phospho-alpha-D-ribose 1-diphosphate is bound by residues 72–73 (YK), R99, K100, K103, H105, and 124–132 (DDVITAGTA). Orotate is bound by residues T128 and R156.

It belongs to the purine/pyrimidine phosphoribosyltransferase family. PyrE subfamily. Homodimer. Mg(2+) is required as a cofactor.

It catalyses the reaction orotidine 5'-phosphate + diphosphate = orotate + 5-phospho-alpha-D-ribose 1-diphosphate. The protein operates within pyrimidine metabolism; UMP biosynthesis via de novo pathway; UMP from orotate: step 1/2. In terms of biological role, catalyzes the transfer of a ribosyl phosphate group from 5-phosphoribose 1-diphosphate to orotate, leading to the formation of orotidine monophosphate (OMP). This Vibrio vulnificus (strain CMCP6) protein is Orotate phosphoribosyltransferase.